The primary structure comprises 196 residues: Large ribosomal subunit protein bL9 (196 aa).

The protein belongs to the bacterial ribosomal protein bL9 family.

Its function is as follows. Binds to the 23S rRNA. The chain is Large ribosomal subunit protein bL9 from Bradyrhizobium sp. (strain ORS 278).